A 444-amino-acid chain; its full sequence is Protein kinase C and casein kinase substrate in neurons protein 1 (444 aa).

Ser2 and Ser79 each carry phosphoserine. An F-BAR domain is found at 13–283 (EETTDSFWEV…AIRGADAQED (271 aa)). Positions 26 to 275 (KRTVKRIDDG…HVYRELEQAI (250 aa)) form a coiled coil. Disordered stretches follow at residues 173 to 194 (REMNSKSEQSVTPEQQKKLQDK) and 309 to 386 (LPHT…DDSK). Thr184 is subject to Phosphothreonine. Basic and acidic residues predominate over residues 314-324 (TKKEKQPKKAE). The segment covering 329-351 (TNATGAVESTSQAGDRGSVSSYD) has biased composition (polar residues). Phosphoserine occurs at positions 346, 348, 349, 361, and 365. Residues 385 to 444 (SKGVRVRALYDYDGQEQDELSFKAGDELTKLGEEDEQGWCRGRLDSGQLGLYPANYVEAI) enclose the SH3 domain. Tyr394 carries the post-translational modification Phosphotyrosine. A phosphoserine mark is found at Ser405 and Ser430.

The protein belongs to the PACSIN family. Homodimer. May form heterooligomers with other PACSINs. Interacts with both COBL and DBNL. Identified in a complex composed of COBL, PACSIN1 and WASL. Interacts (via SH3 domain) with SYNJ1 and WASL. Interacts (via SH3 domain) with DNM1; the interaction is reduced by DNM1 phosphorylation. Interacts with DNM2 and DNM3. Interacts with MAPT. Interacts with EHD1 and EHD3. Interacts with TRPV4. Post-translationally, phosphorylated by casein kinase 2 (CK2) and protein kinase C (PKC).

It is found in the cytoplasm. The protein localises to the cell projection. The protein resides in the synapse. It localises to the synaptosome. Its subcellular location is the ruffle membrane. It is found in the membrane. The protein localises to the cytoplasmic vesicle membrane. The protein resides in the cytosol. It localises to the cell membrane. Binds to membranes via its F-BAR domain and mediates membrane tubulation. Plays a role in the reorganization of the microtubule cytoskeleton via its interaction with MAPT; this decreases microtubule stability and inhibits MAPT-induced microtubule polymerization. Plays a role in cellular transport processes by recruiting DNM1, DNM2 and DNM3 to membranes. Plays a role in the reorganization of the actin cytoskeleton and in neuron morphogenesis via its interaction with COBL and WASL, and by recruiting COBL to the cell cortex. Plays a role in the regulation of neurite formation, neurite branching and the regulation of neurite length. Required for normal synaptic vesicle endocytosis; this process retrieves previously released neurotransmitters to accommodate multiple cycles of neurotransmission. Required for normal excitatory and inhibitory synaptic transmission. This Pongo abelii (Sumatran orangutan) protein is Protein kinase C and casein kinase substrate in neurons protein 1 (Pacsin1).